Consider the following 417-residue polypeptide: Gamma-glutamyl phosphate reductase (417 aa).

Belongs to the gamma-glutamyl phosphate reductase family.

It localises to the cytoplasm. It carries out the reaction L-glutamate 5-semialdehyde + phosphate + NADP(+) = L-glutamyl 5-phosphate + NADPH + H(+). Its pathway is amino-acid biosynthesis; L-proline biosynthesis; L-glutamate 5-semialdehyde from L-glutamate: step 2/2. Its function is as follows. Catalyzes the NADPH-dependent reduction of L-glutamate 5-phosphate into L-glutamate 5-semialdehyde and phosphate. The product spontaneously undergoes cyclization to form 1-pyrroline-5-carboxylate. The polypeptide is Gamma-glutamyl phosphate reductase (Escherichia fergusonii (strain ATCC 35469 / DSM 13698 / CCUG 18766 / IAM 14443 / JCM 21226 / LMG 7866 / NBRC 102419 / NCTC 12128 / CDC 0568-73)).